Consider the following 234-residue polypeptide: Ribose-5-phosphate isomerase A (234 aa).

Substrate is bound by residues Thr28–Thr31, Asp85–Asp88, and Lys98–Gly101. Glu107 serves as the catalytic Proton acceptor. Lys125 provides a ligand contact to substrate.

It belongs to the ribose 5-phosphate isomerase family. Homodimer.

It catalyses the reaction aldehydo-D-ribose 5-phosphate = D-ribulose 5-phosphate. It participates in carbohydrate degradation; pentose phosphate pathway; D-ribose 5-phosphate from D-ribulose 5-phosphate (non-oxidative stage): step 1/1. Catalyzes the reversible conversion of ribose-5-phosphate to ribulose 5-phosphate. This Roseiflexus castenholzii (strain DSM 13941 / HLO8) protein is Ribose-5-phosphate isomerase A.